Here is a 198-residue protein sequence, read N- to C-terminus: Host transcription reprogramming factor 1 (198 aa).

Positions 1-19 (MQLSNFLSIWALVAMGATA) are cleaved as a signal peptide. 2 disordered regions span residues 21–59 (PMPS…SYHS) and 71–198 (ERLA…PVQL). A C2H2-type zinc finger spans residues 58–81 (HSCETCAAPFRTEERLAAHRQADH). Basic and acidic residues-rich tracts occupy residues 71 to 80 (ERLAAHRQAD), 104 to 128 (TSER…RSQE), and 167 to 177 (KLDKPTRKEQY).

It localises to the secreted. The protein localises to the host nucleus. Functionally, secreted effector that translocates into the nuclei of host cells to reprogram the expression of immunity-associated genes by binding to effector binding elements (EBEs) in rice. Binds the 5'-CAATCTTC-3' EBE of promoters from targeted rice genes and probably recruits a yet to be determined host repressor. Causes ambivalent immunity with increased susceptibility to the hemibiotrophic pathogens Magnaporthe oryzae and Xanthomonas oryzae pv. oryzae, but enhances resistance to Cochliobolus miyabeanus, a necrotrophic pathogen. The sequence is that of Host transcription reprogramming factor 1 from Pyricularia oryzae (strain 70-15 / ATCC MYA-4617 / FGSC 8958) (Rice blast fungus).